A 315-amino-acid chain; its full sequence is Indoleacetate decarboxylase activating enzyme (315 aa).

The Radical SAM core domain maps to 21–311 (HDGPGIRTNV…ADIIEAHGVK (291 aa)). Residues Cys-35, Cys-39, Cys-42, Cys-61, Cys-64, Cys-67, Cys-71, Cys-98, Cys-101, Cys-106, and Cys-110 each coordinate [4Fe-4S] cluster. 2 consecutive 4Fe-4S ferredoxin-type domains span residues 52–81 (PQLLYTKMKCIGCMCCARACPYGAVSAITD) and 89–120 (GYVHHDRSKCDKCTTHECLSACFQEALSIAGE). Residues Gly-149, 198 to 200 (DCK), and His-271 contribute to the S-adenosyl-L-methionine site.

The protein belongs to the organic radical-activating enzymes family. [4Fe-4S] cluster is required as a cofactor.

The enzyme catalyses glycyl-[protein] + reduced [flavodoxin] + S-adenosyl-L-methionine = glycin-2-yl radical-[protein] + semiquinone [flavodoxin] + 5'-deoxyadenosine + L-methionine + H(+). In terms of biological role, catalyzes activation of the indoleacetate decarboxylase OsIAD under anaerobic conditions by generation of an organic free radical on a glycine residue, via a homolytic cleavage of S-adenosyl-L-methionine (SAM). This Tractidigestivibacter scatoligenes (Olsenella scatoligenes) protein is Indoleacetate decarboxylase activating enzyme.